Here is a 730-residue protein sequence, read N- to C-terminus: Hepatocyte growth factor (730 aa).

Positions 1 to 31 (MWVTRLLPVLLLQHVLLHLLLLPIAIPYAEG) are cleaved as a signal peptide. Q32 bears the Pyrrolidone carboxylic acid mark. Residues 37–123 (NTLHEFKRSA…HEFDLYENKD (87 aa)) enclose the PAN domain. Cystine bridges form between C70–C96, C74–C84, C128–C206, C149–C189, C177–C201, C211–C288, C232–C271, and C260–C283. Kringle domains lie at 128–206 (CIIG…IPQC) and 211–288 (CMTC…IKMC). The N-linked (GlcNAc...) asparagine glycan is linked to N294. 11 cysteine pairs are disulfide-bonded: C305–C383, C326–C365, C354–C377, C391–C469, C412–C452, C440–C464, C487–C606, C519–C535, C614–C681, C644–C660, and C671–C699. Kringle domains are found at residues 305–383 (CIQG…IPKC) and 391–469 (CYRG…ISRC). In terms of domain architecture, Peptidase S1 spans 495–723 (VVNGIPTRTN…YAKWIHKIIL (229 aa)). N-linked (GlcNAc...) asparagine glycans are attached at residues N568 and N655.

Belongs to the peptidase S1 family. Plasminogen subfamily. As to quaternary structure, dimer of an alpha chain and a beta chain linked by a disulfide bond. Interacts with SRPX2; the interaction increases HGF mitogenic activity. Post-translationally, the single-chain precursor undergoes proteolytic processing by TMPRSS13 resulting in an active two-chain form. The single-chain precursor undergoes proteolytic processing by HGFAC resulting in an active two-chain form.

Functionally, potent mitogen for mature parenchymal hepatocyte cells, seems to be a hepatotrophic factor, and acts as a growth factor for a broad spectrum of tissues and cell types. Activating ligand for the receptor tyrosine kinase MET by binding to it and promoting its dimerization. Activates MAPK signaling following TMPRSS13 cleavage and activation. This is Hepatocyte growth factor (HGF) from Bos taurus (Bovine).